The following is a 447-amino-acid chain: UDP-N-acetyl-alpha-D-muramoyl-L-alanyl-L-glutamate epimerase (447 aa).

The protein belongs to the MurL family.

The catalysed reaction is UDP-N-acetyl-alpha-D-muramoyl-L-alanyl-L-glutamate + ATP + H2O = UDP-N-acetyl-alpha-D-muramoyl-L-alanyl-D-glutamate + AMP + diphosphate + H(+). It participates in cell wall biogenesis; peptidoglycan biosynthesis. Its function is as follows. Cell wall formation. Catalyzes epimerization of the terminal L-glutamate in UDP-N-acetyl-alpha-D-muramoyl-L-alanyl-L-glutamate. In Micromonospora sp. (strain ATCC 39149 / NRRL 15099 / SCC 1413), this protein is UDP-N-acetyl-alpha-D-muramoyl-L-alanyl-L-glutamate epimerase.